Here is a 296-residue protein sequence, read N- to C-terminus: Diguanylate cyclase DgcS (296 aa).

A GGDEF domain is found at 165-293; it reads GSVSLIVLDL…GRNCYKLSPT (129 aa). Mg(2+)-binding residues include D173, L174, and D216. D216 is an active-site residue.

Mg(2+) is required as a cofactor.

The enzyme catalyses 2 GTP = 3',3'-c-di-GMP + 2 diphosphate. Functionally, catalyzes the synthesis of cyclic-di-GMP (c-di-GMP) via the condensation of 2 GTP molecules. May be involved in the regulation of formation of solid surface-associated biofilms and pellicles according to environmental conditions. In Shewanella oneidensis (strain ATCC 700550 / JCM 31522 / CIP 106686 / LMG 19005 / NCIMB 14063 / MR-1), this protein is Diguanylate cyclase DgcS.